A 728-amino-acid polypeptide reads, in one-letter code: 1,4-alpha-glucan branching enzyme GlgB (728 aa).

Catalysis depends on Asp405, which acts as the Nucleophile. Glu458 serves as the catalytic Proton donor.

It belongs to the glycosyl hydrolase 13 family. GlgB subfamily. As to quaternary structure, monomer.

The enzyme catalyses Transfers a segment of a (1-&gt;4)-alpha-D-glucan chain to a primary hydroxy group in a similar glucan chain.. It participates in glycan biosynthesis; glycogen biosynthesis. Its function is as follows. Catalyzes the formation of the alpha-1,6-glucosidic linkages in glycogen by scission of a 1,4-alpha-linked oligosaccharide from growing alpha-1,4-glucan chains and the subsequent attachment of the oligosaccharide to the alpha-1,6 position. This is 1,4-alpha-glucan branching enzyme GlgB from Escherichia coli O157:H7.